We begin with the raw amino-acid sequence, 328 residues long: Tetraacyldisaccharide 4'-kinase (328 aa).

Thr55–Thr62 is an ATP binding site.

It belongs to the LpxK family.

The enzyme catalyses a lipid A disaccharide + ATP = a lipid IVA + ADP + H(+). Its pathway is glycolipid biosynthesis; lipid IV(A) biosynthesis; lipid IV(A) from (3R)-3-hydroxytetradecanoyl-[acyl-carrier-protein] and UDP-N-acetyl-alpha-D-glucosamine: step 6/6. In terms of biological role, transfers the gamma-phosphate of ATP to the 4'-position of a tetraacyldisaccharide 1-phosphate intermediate (termed DS-1-P) to form tetraacyldisaccharide 1,4'-bis-phosphate (lipid IVA). This chain is Tetraacyldisaccharide 4'-kinase, found in Shigella flexneri serotype 5b (strain 8401).